Here is a 235-residue protein sequence, read N- to C-terminus: Phosphoribosylformylglycinamidine synthase subunit PurQ (235 aa).

One can recognise a Glutamine amidotransferase type-1 domain in the interval 5-235 (FGVVVFPGSN…LLNHVSIVAA (231 aa)). The active-site Nucleophile is the Cys-88. Active-site residues include His-205 and Glu-207.

Part of the FGAM synthase complex composed of 1 PurL, 1 PurQ and 2 PurS subunits.

The protein resides in the cytoplasm. It carries out the reaction N(2)-formyl-N(1)-(5-phospho-beta-D-ribosyl)glycinamide + L-glutamine + ATP + H2O = 2-formamido-N(1)-(5-O-phospho-beta-D-ribosyl)acetamidine + L-glutamate + ADP + phosphate + H(+). The enzyme catalyses L-glutamine + H2O = L-glutamate + NH4(+). It functions in the pathway purine metabolism; IMP biosynthesis via de novo pathway; 5-amino-1-(5-phospho-D-ribosyl)imidazole from N(2)-formyl-N(1)-(5-phospho-D-ribosyl)glycinamide: step 1/2. In terms of biological role, part of the phosphoribosylformylglycinamidine synthase complex involved in the purines biosynthetic pathway. Catalyzes the ATP-dependent conversion of formylglycinamide ribonucleotide (FGAR) and glutamine to yield formylglycinamidine ribonucleotide (FGAM) and glutamate. The FGAM synthase complex is composed of three subunits. PurQ produces an ammonia molecule by converting glutamine to glutamate. PurL transfers the ammonia molecule to FGAR to form FGAM in an ATP-dependent manner. PurS interacts with PurQ and PurL and is thought to assist in the transfer of the ammonia molecule from PurQ to PurL. The polypeptide is Phosphoribosylformylglycinamidine synthase subunit PurQ (Salinibacter ruber (strain DSM 13855 / M31)).